We begin with the raw amino-acid sequence, 217 residues long: Cytidylate kinase (217 aa).

Position 9–17 (9–17 (GPAGSGKTT)) interacts with ATP.

This sequence belongs to the cytidylate kinase family. Type 1 subfamily.

It is found in the cytoplasm. It catalyses the reaction CMP + ATP = CDP + ADP. The enzyme catalyses dCMP + ATP = dCDP + ADP. The polypeptide is Cytidylate kinase (Thermosipho melanesiensis (strain DSM 12029 / CIP 104789 / BI429)).